Consider the following 343-residue polypeptide: MTTDTTGRTGNPAAAASPERFRYGFLKGNPQLTKNGELKHLLSIEGLPRSIVNHILDTAEQFVSVTDREVKKVPLLRGKSVFNLFFENSTRTRTTFEIAATRLSADVLNLNINASSTSKGESLLDTINNLSAMHADLFVVRHASSGAPYLIAEHCAPHVHVINAGDGRHAHPTQGLLDMYTIRHYKRDFTKLRVAIVGDILHSRVARSDIHALTTLGVPEVRAIGPRTLLPGGLEQMGVKVFHNLDEGLKGVDVIIMLRLQNERMSGALLPSAQEYFKTWGLTPERLALAAPDAIVMHPGPMNRGVEIDSQVADGPQSVILNQVTFGIAVRMAVMGIVAGNND.

Residues Arg91 and Thr92 each contribute to the carbamoyl phosphate site. An L-aspartate-binding site is contributed by Lys119. Residues Arg141, His171, and Gln174 each coordinate carbamoyl phosphate. L-aspartate-binding residues include Arg204 and Arg259. 2 residues coordinate carbamoyl phosphate: Gly300 and Pro301.

It belongs to the aspartate/ornithine carbamoyltransferase superfamily. ATCase family. In terms of assembly, heterododecamer (2C3:3R2) of six catalytic PyrB chains organized as two trimers (C3), and six regulatory PyrI chains organized as three dimers (R2).

It carries out the reaction carbamoyl phosphate + L-aspartate = N-carbamoyl-L-aspartate + phosphate + H(+). The protein operates within pyrimidine metabolism; UMP biosynthesis via de novo pathway; (S)-dihydroorotate from bicarbonate: step 2/3. Functionally, catalyzes the condensation of carbamoyl phosphate and aspartate to form carbamoyl aspartate and inorganic phosphate, the committed step in the de novo pyrimidine nucleotide biosynthesis pathway. This Burkholderia multivorans (strain ATCC 17616 / 249) protein is Aspartate carbamoyltransferase catalytic subunit.